Here is a 247-residue protein sequence, read N- to C-terminus: uncharacterized protein (247 aa).

The stretch at 200-225 forms a coiled coil; that stretch reads SGKYSELKTKVNDIENDLRTLSSNTN.

This is an uncharacterized protein from Acanthamoeba polyphaga (Amoeba).